Here is a 142-residue protein sequence, read N- to C-terminus: ATP synthase epsilon chain (142 aa).

Belongs to the ATPase epsilon chain family. In terms of assembly, F-type ATPases have 2 components, CF(1) - the catalytic core - and CF(0) - the membrane proton channel. CF(1) has five subunits: alpha(3), beta(3), gamma(1), delta(1), epsilon(1). CF(0) has three main subunits: a, b and c.

It is found in the cell inner membrane. In terms of biological role, produces ATP from ADP in the presence of a proton gradient across the membrane. This is ATP synthase epsilon chain from Shewanella oneidensis (strain ATCC 700550 / JCM 31522 / CIP 106686 / LMG 19005 / NCIMB 14063 / MR-1).